We begin with the raw amino-acid sequence, 674 residues long: DNA ligase (674 aa).

NAD(+) contacts are provided by residues 35-39, 84-85, and Glu-118; these read DFEFD and SL. The active-site N6-AMP-lysine intermediate is the Lys-120. Positions 141, 184, 297, and 321 each coordinate NAD(+). 4 residues coordinate Zn(2+): Cys-415, Cys-418, Cys-433, and Cys-439. In terms of domain architecture, BRCT spans 598–674; the sequence is QVNRNFEGVT…VSEDEFEAML (77 aa).

This sequence belongs to the NAD-dependent DNA ligase family. LigA subfamily. It depends on Mg(2+) as a cofactor. Requires Mn(2+) as cofactor.

The catalysed reaction is NAD(+) + (deoxyribonucleotide)n-3'-hydroxyl + 5'-phospho-(deoxyribonucleotide)m = (deoxyribonucleotide)n+m + AMP + beta-nicotinamide D-nucleotide.. Its function is as follows. DNA ligase that catalyzes the formation of phosphodiester linkages between 5'-phosphoryl and 3'-hydroxyl groups in double-stranded DNA using NAD as a coenzyme and as the energy source for the reaction. It is essential for DNA replication and repair of damaged DNA. In Pelodictyon phaeoclathratiforme (strain DSM 5477 / BU-1), this protein is DNA ligase.